The following is a 413-amino-acid chain: Arginine biosynthesis bifunctional protein ArgJ (413 aa).

6 residues coordinate substrate: Thr-160, Lys-186, Thr-197, Glu-284, Asn-408, and Ser-413. The active-site Nucleophile is the Thr-197.

This sequence belongs to the ArgJ family. As to quaternary structure, heterotetramer of two alpha and two beta chains.

It is found in the cytoplasm. The enzyme catalyses N(2)-acetyl-L-ornithine + L-glutamate = N-acetyl-L-glutamate + L-ornithine. It catalyses the reaction L-glutamate + acetyl-CoA = N-acetyl-L-glutamate + CoA + H(+). It functions in the pathway amino-acid biosynthesis; L-arginine biosynthesis; L-ornithine and N-acetyl-L-glutamate from L-glutamate and N(2)-acetyl-L-ornithine (cyclic): step 1/1. It participates in amino-acid biosynthesis; L-arginine biosynthesis; N(2)-acetyl-L-ornithine from L-glutamate: step 1/4. Functionally, catalyzes two activities which are involved in the cyclic version of arginine biosynthesis: the synthesis of N-acetylglutamate from glutamate and acetyl-CoA as the acetyl donor, and of ornithine by transacetylation between N(2)-acetylornithine and glutamate. The protein is Arginine biosynthesis bifunctional protein ArgJ of Burkholderia pseudomallei (strain K96243).